A 510-amino-acid chain; its full sequence is Dentin matrix acidic phosphoprotein 1 (510 aa).

The first 16 residues, 1 to 16, serve as a signal peptide directing secretion; it reads MKTTILLMFLWGLSCA. The interval 23 to 510 is disordered; sequence QNTESKSSEE…QDDNDCQDGY (488 aa). 2 stretches are compositionally biased toward acidic residues: residues 61 to 77 and 101 to 119; these read QANEDPSDSTESEEVLG and NKDDDEDESGDDTFGDDDG. Basic and acidic residues-rich tracts occupy residues 123 to 180, 273 to 288, and 299 to 328; these read PEER…RPEG, RLPEEDGRGELDDSRT, and PDSKEAGLGQSREHSKSESRQESEENRSPE. Residues 333-343 show a composition bias toward polar residues; the sequence is VQDPSSESSQE. N-linked (GlcNAc...) asparagine glycosylation occurs at Asn351. Basic and acidic residues predominate over residues 358–367; that stretch reads EALHESRGDN. A Cell attachment site motif is present at residues 364–366; that stretch reads RGD. The N-linked (GlcNAc...) asparagine glycan is linked to Asn370. Basic and acidic residues predominate over residues 407-417; that stretch reads SESHESLRSSE. Residues Asn427 and Asn464 are each glycosylated (N-linked (GlcNAc...) asparagine). The span at 481-499 shows a compositional bias: basic and acidic residues; sequence TEVESRKLTVDAYHNKPIG. Positions 500–510 are enriched in acidic residues; that stretch reads DQDDNDCQDGY.

Interacts with importin alpha. Post-translationally, phosphorylated in the cytosol and extracellular matrix and unphosphorylated in the nucleus. Phosphorylation is necessary for nucleocytoplasmic transport and may be catalyzed by a nuclear isoform of CK2 and can be augmented by calcium. Phosphorylated (in vitro) by FAM20C in the extracellular medium at sites within the S-x-E/pS motif. Expressed in fetal brain, bone and tooth particularly in odontoblast, but not in ameloblast. Not expressed in liver and skin.

The protein localises to the nucleus. It localises to the cytoplasm. The protein resides in the secreted. Its subcellular location is the extracellular space. It is found in the extracellular matrix. Its function is as follows. May have a dual function during osteoblast differentiation. In the nucleus of undifferentiated osteoblasts, unphosphorylated form acts as a transcriptional component for activation of osteoblast-specific genes like osteocalcin. During the osteoblast to osteocyte transition phase it is phosphorylated and exported into the extracellular matrix, where it regulates nucleation of hydroxyapatite. The chain is Dentin matrix acidic phosphoprotein 1 (DMP1) from Bos taurus (Bovine).